The sequence spans 187 residues: Cytochrome b-245 chaperone 1 (187 aa).

The chain crosses the membrane as a helical span at residues 20–42 (GIRSWSLLVGILSTGLAAAYYSG). The tract at residues 167 to 187 (ESPSERSQSSDSEPDGPGGQS) is disordered. Phosphoserine occurs at positions 168 and 170.

The protein belongs to the CYBC1 family. In terms of assembly, interacts with CYBB; CYBC1 may act as a chaperone stabilizing Cytochrome b-245 heterodimer.

The protein localises to the endoplasmic reticulum membrane. In terms of biological role, functions as a chaperone necessary for a stable expression of the CYBA and CYBB subunits of the cytochrome b-245 heterodimer. Controls the phagocyte respiratory burst and is essential for innate immunity. This Mus musculus (Mouse) protein is Cytochrome b-245 chaperone 1.